A 257-amino-acid polypeptide reads, in one-letter code: Beta-fibrinogenase mucrofibrase-4 (257 aa).

A signal peptide spans 1–18 (MVLIRVLANLLILQLSYA). The propeptide occupies 19–24 (QKSSEL). The region spanning 25-248 (VIGGDECNIN…HLDWIKGFIA (224 aa)) is the Peptidase S1 domain. 6 disulfide bridges follow: Cys-31–Cys-162, Cys-49–Cys-65, Cys-97–Cys-255, Cys-141–Cys-209, Cys-173–Cys-188, and Cys-199–Cys-224. Catalysis depends on charge relay system residues His-64 and Asp-109. The active-site Charge relay system is the Ser-203.

Belongs to the peptidase S1 family. Snake venom subfamily. As to quaternary structure, monomer. As to expression, expressed by the venom gland.

Its subcellular location is the secreted. Snake venom serine protease with fibrinogenolytic activities. Cleaves beta-chain of fibrinogen (FGB) efficiently and shows relatively lower activity on alpha-chain. This chain is Beta-fibrinogenase mucrofibrase-4, found in Protobothrops mucrosquamatus (Taiwan habu).